The sequence spans 469 residues: Acetyl-CoA decarbonylase/synthase complex subunit beta 1 (469 aa).

[Ni-Fe-S] cluster contacts are provided by cysteine 189, cysteine 192, cysteine 278, and cysteine 280.

Belongs to the CdhC family. In terms of assembly, monomer. The ACDS complex is made up of alpha, epsilon, beta, gamma and delta chains with a probable stoichiometry of (alpha(2)epsilon(2))(4)-beta(8)-(gamma(1)delta(1))(8) (Potential). [Ni-Fe-S] cluster is required as a cofactor.

The enzyme catalyses Co(I)-[corrinoid Fe-S protein] + acetyl-CoA + H(+) = methyl-Co(III)-[corrinoid Fe-S protein] + CO + CoA. It participates in one-carbon metabolism; methanogenesis from acetate. Part of a complex that catalyzes the reversible cleavage of acetyl-CoA, allowing growth on acetate as sole source of carbon and energy. The alpha-epsilon complex generates CO from CO(2), while the beta subunit (this protein) combines the CO with CoA and a methyl group to form acetyl-CoA. The methyl group, which is incorporated into acetyl-CoA, is transferred to the beta subunit by a corrinoid iron-sulfur protein (the gamma-delta complex). In Methanosarcina acetivorans (strain ATCC 35395 / DSM 2834 / JCM 12185 / C2A), this protein is Acetyl-CoA decarbonylase/synthase complex subunit beta 1 (cdhC1).